Here is a 266-residue protein sequence, read N- to C-terminus: uncharacterized protein (266 aa).

It belongs to the chlamydial CPn_0087/CT3_09/TC_0583 family.

This is an uncharacterized protein from Chlamydia muridarum (strain MoPn / Nigg).